The following is a 79-amino-acid chain: ATP synthase subunit c (79 aa).

Helical transmembrane passes span 11–31 (IAVA…IGIL) and 59–79 (LVDA…FAVI).

It belongs to the ATPase C chain family. As to quaternary structure, F-type ATPases have 2 components, F(1) - the catalytic core - and F(0) - the membrane proton channel. F(1) has five subunits: alpha(3), beta(3), gamma(1), delta(1), epsilon(1). F(0) has three main subunits: a(1), b(2) and c(10-14). The alpha and beta chains form an alternating ring which encloses part of the gamma chain. F(1) is attached to F(0) by a central stalk formed by the gamma and epsilon chains, while a peripheral stalk is formed by the delta and b chains.

The protein localises to the cell membrane. Functionally, f(1)F(0) ATP synthase produces ATP from ADP in the presence of a proton or sodium gradient. F-type ATPases consist of two structural domains, F(1) containing the extramembraneous catalytic core and F(0) containing the membrane proton channel, linked together by a central stalk and a peripheral stalk. During catalysis, ATP synthesis in the catalytic domain of F(1) is coupled via a rotary mechanism of the central stalk subunits to proton translocation. Its function is as follows. Key component of the F(0) channel; it plays a direct role in translocation across the membrane. A homomeric c-ring of between 10-14 subunits forms the central stalk rotor element with the F(1) delta and epsilon subunits. This is ATP synthase subunit c from Buchnera aphidicola subsp. Baizongia pistaciae (strain Bp).